The chain runs to 319 residues: Exopolyphosphatase 2 (319 aa).

This sequence belongs to the GppA/Ppx family. Homodimer.

The enzyme catalyses [phosphate](n) + H2O = [phosphate](n-1) + phosphate + H(+). Its activity is regulated as follows. Exopolyphosphatase activity is inhibited by ppGpp alarmones produced during the bacterial stringent response. Its function is as follows. Degradation of inorganic polyphosphates (polyP). Releases orthophosphate processively from the ends of the polyP chain. Prefers long-chain length polyphosphates as substrates. The chain is Exopolyphosphatase 2 from Mycobacterium tuberculosis (strain CDC 1551 / Oshkosh).